The sequence spans 149 residues: IPVEVLAQGAWVLTDPAFVEAVGPESQVEAAVSAVGLDLGDEVVLFPLGPEGPLEGVELRPNRVRVVERREALFLKEVPLSLNPPPGRRLLDYAPKTVRLVGPREALEGLAGVTATLQEALGPGEVEVAVAPDLPPGSIPWDRFGCGLR.

One can recognise a YbbR-like domain in the interval 1–68; the sequence is IPVEVLAQGA…LRPNRVRVVE (68 aa).

In Thermus thermophilus, this protein is YbbR-like domain-containing protein in def 5'region.